The primary structure comprises 370 residues: Phosphate acyltransferase (370 aa).

Belongs to the PlsX family. Homodimer. Probably interacts with PlsY.

It is found in the cytoplasm. The enzyme catalyses a fatty acyl-[ACP] + phosphate = an acyl phosphate + holo-[ACP]. The protein operates within lipid metabolism; phospholipid metabolism. Catalyzes the reversible formation of acyl-phosphate (acyl-PO(4)) from acyl-[acyl-carrier-protein] (acyl-ACP). This enzyme utilizes acyl-ACP as fatty acyl donor, but not acyl-CoA. This chain is Phosphate acyltransferase, found in Paracoccus denitrificans (strain Pd 1222).